The chain runs to 1154 residues: CRISPR-associated endoribonuclease Cas13a (1154 aa).

HEPN-like fold regions lie at residues 330–466 (TTSN…RFIN) and 923–1154 (FVHL…EMKK).

The protein belongs to the CRISPR-associated endoribonuclease Cas13a family. A divalent metal cation is required as a cofactor.

Target RNA acts as an activator for non-specific ssRNA degradation. Its function is as follows. CRISPR (clustered regularly interspaced short palindromic repeat), is an adaptive immune system that provides protection against mobile genetic elements (viruses, transposable elements and conjugative plasmids). CRISPR clusters contain sequences complementary to antecedent mobile elements and target invading nucleic acids. Unlike many single-component effectors, this CRISPR-Cas system targets RNA. CRISPR clusters are transcribed from pre-CRISPR RNA (crRNA) and processed into crRNA by this protein. Cleaves linear target ssRNA in a pre-crRNA-dependent fashion, preferentially before U residues. Binding a viable target RNA target activates this protein for non-specific RNA degradation in vitro (called collateral RNA degradation), which is fairly sensitive as it requires picomolar levels of viable target RNA. In Paludibacter propionicigenes (strain DSM 17365 / JCM 13257 / WB4), this protein is CRISPR-associated endoribonuclease Cas13a.